A 340-amino-acid polypeptide reads, in one-letter code: Gigasin-2 (340 aa).

The signal sequence occupies residues 1-21 (MNKMSPLYVLALCCLATTVFA). EGF-like domains follow at residues 22–57 (KYDC…EDCG) and 65–97 (TAAN…DMCE). 6 disulfides stabilise this stretch: Cys-25/Cys-39, Cys-33/Cys-45, Cys-47/Cys-56, Cys-69/Cys-79, Cys-73/Cys-85, and Cys-87/Cys-96.

As to expression, component of the organic matrix of calcified shell layers.

The sequence is that of Gigasin-2 from Magallana gigas (Pacific oyster).